A 2771-amino-acid polypeptide reads, in one-letter code: Teneurin-4 (2771 aa).

Over residues 1–22 (MDVKERKPYRSLTRRRDAERRY) the composition is skewed to basic and acidic residues. The disordered stretch occupies residues 1–45 (MDVKERKPYRSLTRRRDAERRYTSSSADSEEGKGPQKSYSSSETL). The Teneurin N-terminal domain maps to 1–341 (MDVKERKPYR…KPSKYCNWKC (341 aa)). At 1–345 (MDVKERKPYR…YCNWKCAALS (345 aa)) the chain is on the cytoplasmic side. Ser-124 is subject to Phosphoserine. The tract at residues 132 to 233 (WGRSTRSGRS…PPAGSAQEPT (102 aa)) is disordered. Low complexity predominate over residues 134–155 (RSTRSGRSSCLSSRANSNLTLT). The segment covering 156 to 166 (DTEHENTETDH) has biased composition (basic and acidic residues). A Phosphothreonine modification is found at Thr-178. A compositionally biased stretch (polar residues) spans 191-211 (QHHAASINSLNRGNFTPRSNP). Residues 346 to 366 (AILISATLVILLAYFVAMHLF) traverse the membrane as a helical segment. The Extracellular segment spans residues 367–2771 (GLNWHLQPME…FMRQSEMGRR (2405 aa)). Residues 403–428 (SGGTGLETPDRKGKGAAEGKPSSLFP) form a disordered region. Positions 410-419 (TPDRKGKGAA) are enriched in basic and acidic residues. Residue Asn-469 is glycosylated (N-linked (GlcNAc...) asparagine). Residues 509 to 528 (ARSLEGPQRQSRGPVPPSSH) form a disordered region. EGF-like domains lie at 564–595 (SVDNCPSNCYGNGDCISGTCHCFLGFLGPDCG), 596–626 (RASCPVLCSGNGQYMKGRCLCHSGWKGAECD), 628–660 (PTNQCIDVACSSHGTCIMGTCICNPGYKGESCE), 661–692 (EVDCMDPTCSSRGVCVRGECHCSVGWGGTNCE), 694–727 (PRATCLDQCSGHGTFLPDTGLCNCDPSWTGHDCS), 728–759 (IEICAADCGGHGVCVGGTCRCEDGWMGAACDQ), 760–789 (RACHPRCAEHGTCRDGKCECSPGWNGEHCT), and 790–833 (IAHY…TGCD). 22 disulfide bridges follow: Cys-568–Cys-578, Cys-572–Cys-583, Cys-585–Cys-594, Cys-603–Cys-614, Cys-616–Cys-625, Cys-632–Cys-643, Cys-637–Cys-648, Cys-650–Cys-659, Cys-664–Cys-675, Cys-669–Cys-680, Cys-682–Cys-691, Cys-702–Cys-715, Cys-717–Cys-726, Cys-731–Cys-741, Cys-735–Cys-746, Cys-748–Cys-757, Cys-762–Cys-772, Cys-766–Cys-777, Cys-779–Cys-788, Cys-802–Cys-812, Cys-806–Cys-821, and Cys-823–Cys-832. Residues Asn-942 and Asn-1261 are each glycosylated (N-linked (GlcNAc...) asparagine). NHL repeat units lie at residues 1218-1261 (SCPS…PSGN), 1266-1310 (LEMR…VKST), 1336-1380 (TRCG…NGII), 1395-1446 (LSCD…VAGR), and 1525-1568 (CFSG…IRKN). The YD 1 repeat unit spans residues 1578–1597 (YELSSPIDQELYLFDTSGKH). Asn-1611 carries N-linked (GlcNAc...) asparagine glycosylation. YD repeat units lie at residues 1614–1634 (YTGDGDITHITDNNGNMVNVR), 1677–1696 (YHGNSGLLATKSNENGWTTF), and 1697–1719 (YEYDSFGRLTNVTFPTGQVSSFR). 4 N-linked (GlcNAc...) asparagine glycosylation sites follow: Asn-1707, Asn-1743, Asn-1801, and Asn-1886. 18 YD repeats span residues 1889–1908 (YSPGGHIAGIQRGIMSERME), 1930–1948 (YLEKSMVLHLHSQRQYIFE), 1949–1969 (FDKNDRLSSVTMPNVARQTLE), 1976–1993 (YYRNIYQPPEGNASVIQD), 1994–2015 (FTEDGHLLHTFYLGTGRRVIYK), 2016–2033 (YGKLSKLAETLYDTTKVS), 2036–2056 (YDETAGMLKTVNLQNEGFTCT), 2059–2079 (YRQIGPLIDRQIFRFTEEGMV), 2087–2106 (YDNSFRVTSMQAVINETPLP), 2112–2129 (YDDVSGKTEQFGKFGVIY), 2130–2156 (YDINQIITTAVMTHTKHFDAYGRMKEV), 2158–2171 (YEIFRSLMYWMTVQ), 2172–2195 (YDNMGRVVKKELKVGPYANTTRYS), 2198–2218 (YDADGQLQTVSINDKPLWRYS), 2219–2239 (YDLNGNLHLLSPGNSARLTPL), 2241–2261 (YDLRDRITRLGDVQYKMDEDG), 2273–2293 (YNSAGLLIKAYNRASGWSVRY), and 2295–2315 (YDGLGRRVSSKSSHSHHLQFF). N-linked (GlcNAc...) asparagine glycosylation occurs at Asn-1987. N-linked (GlcNAc...) asparagine glycosylation is present at Asn-2190. A glycan (N-linked (GlcNAc...) asparagine) is linked at Asn-2330. The stretch at 2341–2382 (YDLQGHLFAMELSSGDEFYIACDNIGTPLAVFSGTGLMIKQI) is one YD 23 repeat. A glycan (N-linked (GlcNAc...) asparagine) is linked at Asn-2648.

It belongs to the tenascin family. Teneurin subfamily. As to quaternary structure, homodimer; disulfide-linked. May also form heterodimer with either TENM1 or TENM2 or TENM3. Expressed in brain and spinal cord (at protein level). Expressed in neurons and oligodendrocytes of the spinal cord. Expressed weakly in kidney, lung and spleen. Expressed in the cortex, CA1, CA2 and CA3 of the hippocampus. Expressed in the white matter, Purkinje cells and molecular layer of the cerebellum.

The protein localises to the cell membrane. Its subcellular location is the cell projection. The protein resides in the nucleus. It localises to the cytoplasm. Functionally, involved in neural development, regulating the establishment of proper connectivity within the nervous system. Plays a role in the establishment of the anterior-posterior axis during gastrulation. Regulates the differentiation and cellular process formation of oligodendrocytes and myelination of small-diameter axons in the central nervous system (CNS). Promotes activation of focal adhesion kinase. May function as a cellular signal transducer. The protein is Teneurin-4 (Tenm4) of Mus musculus (Mouse).